A 367-amino-acid polypeptide reads, in one-letter code: Pentatricopeptide repeat-containing protein At1g11900 (367 aa).

PPR repeat units lie at residues 69 to 103 (SKIDYTNLVEKFTRDGNLSGAYDLLQSLQEKNICL), 104 to 139 (PISVFKNLLAAAGELNDMKLSCRVFREVLILPGKEP), 141 to 175 (SSDCYLNLARAFINTDDCTYLTSLLKEISESSLPY), 176 to 210 (RLIVMNRIIFAFAETRQIDKVLMILKEMKEWECKP), 211 to 241 (DVITYNSVLDILGRAGLVNEILGVLSTMKED), 247 to 281 (NIITYNTVLNGMRKACRFDMCLVIYNEMVQCGIEP), 282 to 316 (DLLSYTAVIDSLGRSGNVKESLRLFDEMKQRQIRP), and 317 to 347 (SVYVYRALIDCLKKSGDFQSALQLSDELKNT).

This sequence belongs to the PPR family. P subfamily.

The protein is Pentatricopeptide repeat-containing protein At1g11900 of Arabidopsis thaliana (Mouse-ear cress).